Reading from the N-terminus, the 543-residue chain is MGDWNLLGGILEEVHSHSTIVGKIWLTILFIFRMLVLRVAAEDVWDDEQSAFACNTRQPGCNNICYDDAFPISLIRFWVLQIIFVSSPSLVYMGHALYRLRAFEKDRQRKKSHLRAQMENPDLDLEEQQRIDRELRRLEEQKRIHKVPLKGCLLRTYVLHILTRSVLEVGFMIGQYILYGFQMHPLYKCTQPPCPNAVDCFVSRPTEKTIFMLFMHSIAAISLLLNILEIFHLGIRKIMRTLYKKSSSEGIEDETGPPFHLKKYSVAQQCMICSSLPERISPLQANNQQQVIRVNVPKSKTMWQIPQPRQLEVDPSNGKKDWSEKDQHSGQLHVHSPCPWAGSAGNQHLGQQSDHSSFGLQNTMSQSWLGTTTAPRNCPSFAVGTWEQSQDPEPSGEPLTDLHSHCRDSEGSMRESGVWIDRSRPGSRKASFLSRLLSEKRHLHSDSGSSGSRNSSCLDFPHWENSPSPLPSVTGHRTSMVRQAALPIMELSQELFHSGCFLFPFFLPGVCMYVCVDREADGGGDYLWRDKIIHSIHSVKFNS.

Residues 1–16 (MGDWNLLGGILEEVHS) are Cytoplasmic-facing. The chain crosses the membrane as a helical span at residues 17–37 (HSTIVGKIWLTILFIFRMLVL). At 38-76 (RVAAEDVWDDEQSAFACNTRQPGCNNICYDDAFPISLIR) the chain is on the extracellular side. A helical membrane pass occupies residues 77–97 (FWVLQIIFVSSPSLVYMGHAL). Over 98 to 165 (YRLRAFEKDR…TYVLHILTRS (68 aa)) the chain is Cytoplasmic. Residues 166-186 (VLEVGFMIGQYILYGFQMHPL) form a helical membrane-spanning segment. Residues 187–209 (YKCTQPPCPNAVDCFVSRPTEKT) are Extracellular-facing. A helical transmembrane segment spans residues 210–230 (IFMLFMHSIAAISLLLNILEI). The Cytoplasmic segment spans residues 231–543 (FHLGIRKIMR…HSIHSVKFNS (313 aa)). Disordered stretches follow at residues 306–359 (PQPR…SSFG) and 379–424 (PSFA…DRSR). Over residues 317-328 (NGKKDWSEKDQH) the composition is skewed to basic and acidic residues. A compositionally biased stretch (polar residues) spans 344–359 (AGNQHLGQQSDHSSFG). Residues 400–413 (TDLHSHCRDSEGSM) are compositionally biased toward basic and acidic residues.

The protein belongs to the connexin family. Alpha-type (group II) subfamily. As to quaternary structure, a connexon is composed of a hexamer of connexins. In terms of tissue distribution, expressed in skeletal muscle and heart.

The protein resides in the cell membrane. The protein localises to the cell junction. It is found in the gap junction. Functionally, one gap junction consists of a cluster of closely packed pairs of transmembrane channels, the connexons, through which materials of low MW diffuse from one cell to a neighboring cell. Involved in tracer coupling between horizontal cells of the retina. May play a role in the regulation of horizontal cell patterning. This chain is Gap junction alpha-10 protein (GJA10), found in Homo sapiens (Human).